Reading from the N-terminus, the 563-residue chain is Dihydroxy-acid dehydratase (563 aa).

Cys51 contributes to the [2Fe-2S] cluster binding site. Residue Asp83 coordinates Mg(2+). Cys124 provides a ligand contact to [2Fe-2S] cluster. Mg(2+)-binding residues include Asp125 and Lys126. The residue at position 126 (Lys126) is an N6-carboxylysine. Cys196 provides a ligand contact to [2Fe-2S] cluster. Glu448 provides a ligand contact to Mg(2+). The Proton acceptor role is filled by Ser474.

It belongs to the IlvD/Edd family. Homodimer. [2Fe-2S] cluster serves as cofactor. Mg(2+) is required as a cofactor.

It carries out the reaction (2R)-2,3-dihydroxy-3-methylbutanoate = 3-methyl-2-oxobutanoate + H2O. It catalyses the reaction (2R,3R)-2,3-dihydroxy-3-methylpentanoate = (S)-3-methyl-2-oxopentanoate + H2O. The protein operates within amino-acid biosynthesis; L-isoleucine biosynthesis; L-isoleucine from 2-oxobutanoate: step 3/4. It participates in amino-acid biosynthesis; L-valine biosynthesis; L-valine from pyruvate: step 3/4. Its function is as follows. Functions in the biosynthesis of branched-chain amino acids. Catalyzes the dehydration of (2R,3R)-2,3-dihydroxy-3-methylpentanoate (2,3-dihydroxy-3-methylvalerate) into 2-oxo-3-methylpentanoate (2-oxo-3-methylvalerate) and of (2R)-2,3-dihydroxy-3-methylbutanoate (2,3-dihydroxyisovalerate) into 2-oxo-3-methylbutanoate (2-oxoisovalerate), the penultimate precursor to L-isoleucine and L-valine, respectively. The chain is Dihydroxy-acid dehydratase from Polynucleobacter necessarius subsp. necessarius (strain STIR1).